The primary structure comprises 466 residues: A-type ATP synthase subunit B (466 aa).

The protein belongs to the ATPase alpha/beta chains family. Has multiple subunits with at least A(3), B(3), C, D, E, F, H, I and proteolipid K(x).

The protein resides in the cell membrane. Its function is as follows. Component of the A-type ATP synthase that produces ATP from ADP in the presence of a proton gradient across the membrane. The B chain is a regulatory subunit. In Metallosphaera sedula (strain ATCC 51363 / DSM 5348 / JCM 9185 / NBRC 15509 / TH2), this protein is A-type ATP synthase subunit B.